Consider the following 43-residue polypeptide: Protein PsbN (43 aa).

A helical membrane pass occupies residues 5 to 27; it reads TFLSIFISAALLGITGYSIYTAF.

Belongs to the PsbN family.

The protein resides in the plastid. It is found in the cyanelle thylakoid membrane. In terms of biological role, may play a role in photosystem I and II biogenesis. The sequence is that of Protein PsbN from Cyanophora paradoxa.